The primary structure comprises 483 residues: Zinc metalloproteinase/disintegrin (483 aa).

A signal peptide spans 1 to 20 (MIQVLLVTLCLAAFPYQGSS). The propeptide occupies 21–190 (IILESGNVND…KKASQLNLTP (170 aa)). Positions 198 to 394 (RYIELVVVAD…HNPQCMLNEP (197 aa)) constitute a Peptidase M12B domain. Ca(2+) is bound by residues E201 and D285. 3 disulfide bridges follow: C309-C389, C349-C373, and C351-C356. Residue H334 coordinates Zn(2+). E335 is an active-site residue. Zn(2+) contacts are provided by H338 and H344. C389 and N392 together coordinate Ca(2+). Positions 395 to 418 (LRTDIVSTPVSGNELLETGEESDF) are excised as a propeptide. A Disintegrin domain is found at 402–483 (TPVSGNELLE…AGCPRNPFHA (82 aa)). Cystine bridges form between C425/C448, C439/C445, C444/C469, and C457/C476. The Cell attachment site motif lies at 461-463 (RGD).

It belongs to the venom metalloproteinase (M12B) family. P-II subfamily. P-IId sub-subfamily. Homodimer; disulfide-linked (disintegrin). It depends on Zn(2+) as a cofactor. Expressed by the venom gland.

Its subcellular location is the secreted. Functionally, impairs hemostasis in the envenomed animal. This protein has not been identified in the venom. Inhibits ADP-induced platelet aggregation. Binds and inhibits integrins GPIIb/GPIIIa (ITGA2B/ITGB3), alpha-5/beta-1 (ITGA5/ITGB1), alpha-V/beta-3 (ITGAV/ITGB3), and alpha-V/beta-5 (ITGAV/ITGB5). It blocks cancer cell adhesion (tested on human breast cancer cell line MDA-MB-435) to fibronectin and vitronectin and thus prevents invasion of cancer cells. This Agkistrodon contortrix contortrix (Southern copperhead) protein is Zinc metalloproteinase/disintegrin.